A 780-amino-acid chain; its full sequence is Gelsolin (780 aa).

The residue at position 1 (Met-1) is an N-acetylmethionine; alternate. A signal peptide spans 1–25 (MAPYRSSLLCALLLLALCALSPSHA). The actin-severing stretch occupies residues 51-174 (VVEHPEFLKA…YKKGGVASGF (124 aa)). One copy of the Gelsolin-like 1 repeat lies at 74–155 (FDLVPVPPNL…EVQGFESSTF (82 aa)). At Tyr-84 the chain carries Phosphotyrosine. Gly-90, Asp-91, Glu-122, Asp-134, Gly-139, and Ala-141 together coordinate Ca(2+). The segment at 121–124 (DESG) is actin-actin interfilament contact point. 160–167 (KSGLKYKK) contributes to the a 1,2-diacyl-sn-glycero-3-phospho-(1D-myo-inositol-4,5-bisphosphate) binding site. Val-170 lines the Ca(2+) pocket. An a 1,2-diacyl-sn-glycero-3-phospho-(1D-myo-inositol-4,5-bisphosphate)-binding site is contributed by 186-194 (RLFQVKGRR). Residues 196–268 (VRATEVPVSW…SEEGGEPEAM (73 aa)) form a Gelsolin-like 2 repeat. Residues Gly-211 and Asp-212 each contribute to the Ca(2+) site. A disulfide bond links Cys-213 and Cys-226. Ca(2+) is bound at residue Glu-234. The interval 244–269 (GIRDNERSGRAQVHVSEEGGEPEAML) is disordered. Residues Asp-284, Glu-327, Asp-328, and Glu-352 each coordinate Ca(2+). The stretch at 315–387 (DENPFAQGAL…LPEGGETPLF (73 aa)) is one Gelsolin-like 3 repeat. 2 positions are modified to phosphotyrosine: Tyr-407 and Tyr-463. The segment at 432 to 780 (AAQHGMDDDG…LDRALAELAA (349 aa)) is actin-binding, Ca-sensitive. Residues 453–534 (SNKVPVDPAT…VQGKEPAHLM (82 aa)) form a Gelsolin-like 4 repeat. The Ca(2+) site is built by Gly-469, Asp-470, Glu-500, Asp-512, Gly-517, Pro-519, and Thr-549. The Gelsolin-like 5 repeat unit spans residues 575-640 (RAVEVMPKSG…EEGSEPDAFW (66 aa)). Residue Lys-582 is modified to N6-acetyllysine. Asn-589 and Asp-590 together coordinate Ca(2+). Tyr-601 is subject to Phosphotyrosine. Ca(2+) is bound at residue Glu-612. Position 649 is a phosphotyrosine (Tyr-649). The stretch at 679–754 (IEEVPGELMQ…VRQGFEPPSF (76 aa)) is one Gelsolin-like 6 repeat. Ca(2+) contacts are provided by Asp-694, Asp-695, and Glu-717. Thr-740 bears the Phosphothreonine mark.

The protein belongs to the villin/gelsolin family. In terms of assembly, binds to actin and to fibronectin. Identified in a complex composed of ACTA1, COBL, GSN and TMSB4X. Interacts with the inactive form of EIF2AK2/PKR. Interacts with FLII. Phosphorylated on tyrosine residues in vitro.

The protein resides in the cytoplasm. Its subcellular location is the cytoskeleton. The protein localises to the secreted. Its function is as follows. Calcium-regulated, actin-modulating protein that binds to the plus (or barbed) ends of actin monomers or filaments, preventing monomer exchange (end-blocking or capping). It can promote the assembly of monomers into filaments (nucleation) as well as sever filaments already formed. Plays a role in ciliogenesis. In Mus musculus (Mouse), this protein is Gelsolin (Gsn).